A 161-amino-acid polypeptide reads, in one-letter code: 3-isopropylmalate dehydratase small subunit (161 aa).

This sequence belongs to the LeuD family. LeuD type 2 subfamily. As to quaternary structure, heterodimer of LeuC and LeuD.

The catalysed reaction is (2R,3S)-3-isopropylmalate = (2S)-2-isopropylmalate. The protein operates within amino-acid biosynthesis; L-leucine biosynthesis; L-leucine from 3-methyl-2-oxobutanoate: step 2/4. Catalyzes the isomerization between 2-isopropylmalate and 3-isopropylmalate, via the formation of 2-isopropylmaleate. This chain is 3-isopropylmalate dehydratase small subunit, found in Clostridium botulinum (strain Eklund 17B / Type B).